The primary structure comprises 178 residues: Sec-independent protein translocase protein TatB (178 aa).

Residues 1-21 (MFDIGWSELVVIAVVALIAIG) traverse the membrane as a helical segment. The segment covering 77-86 (TSGNLMTKLT) has biased composition (polar residues). The disordered stretch occupies residues 77–178 (TSGNLMTKLT…HEAVKDAKAS (102 aa)). The segment covering 93-102 (PKLEDLDKPA) has biased composition (basic and acidic residues). The span at 155–165 (HATPEPAPATH) shows a compositional bias: low complexity. Over residues 166–178 (ETPHEAVKDAKAS) the composition is skewed to basic and acidic residues.

This sequence belongs to the TatB family. As to quaternary structure, the Tat system comprises two distinct complexes: a TatABC complex, containing multiple copies of TatA, TatB and TatC subunits, and a separate TatA complex, containing only TatA subunits. Substrates initially bind to the TatABC complex, which probably triggers association of the separate TatA complex to form the active translocon.

The protein localises to the cell inner membrane. In terms of biological role, part of the twin-arginine translocation (Tat) system that transports large folded proteins containing a characteristic twin-arginine motif in their signal peptide across membranes. Together with TatC, TatB is part of a receptor directly interacting with Tat signal peptides. TatB may form an oligomeric binding site that transiently accommodates folded Tat precursor proteins before their translocation. This chain is Sec-independent protein translocase protein TatB, found in Nitrobacter hamburgensis (strain DSM 10229 / NCIMB 13809 / X14).